A 129-amino-acid chain; its full sequence is Large ribosomal subunit protein bL20 (129 aa).

It belongs to the bacterial ribosomal protein bL20 family.

Binds directly to 23S ribosomal RNA and is necessary for the in vitro assembly process of the 50S ribosomal subunit. It is not involved in the protein synthesizing functions of that subunit. In Mycobacteroides abscessus (strain ATCC 19977 / DSM 44196 / CCUG 20993 / CIP 104536 / JCM 13569 / NCTC 13031 / TMC 1543 / L948) (Mycobacterium abscessus), this protein is Large ribosomal subunit protein bL20.